The following is a 194-amino-acid chain: UPF0232 protein MSMEG_0004/MSMEI_0006 (194 aa).

The span at 1 to 14 (MTGPFDDDGPEEDA) shows a compositional bias: acidic residues. Residues 1–81 (MTGPFDDDGP…GPGPDARDPQ (81 aa)) form a disordered region. A compositionally biased stretch (basic and acidic residues) spans 30-52 (DLVRRTLEEARGAARSQGKDVGR).

It belongs to the UPF0232 family.

The polypeptide is UPF0232 protein MSMEG_0004/MSMEI_0006 (Mycolicibacterium smegmatis (strain ATCC 700084 / mc(2)155) (Mycobacterium smegmatis)).